The primary structure comprises 1978 residues: Centrosomal protein Cep290 (1978 aa).

The tract at residues 1–650 (MSMDIPETVS…SLCEVPEIAE (650 aa)) is necessary and sufficient for function in ciliogenesis, transition zone (TZ) assembly, and recruitment of DZP1 and Mks1 to the TZ. Also required for subcellular localization to the cilium basal body. Coiled coils occupy residues 76 to 384 (DRRL…KSQQ) and 471 to 505 (IERL…LQQD). Residues 271-296 (QLEGKSISSGQTNSSNSQSQQEEEHA) are disordered. Residues 276–290 (SISSGQTNSSNSQSQ) show a composition bias toward low complexity. Residues 663–688 (ATRPSSPTEATMGLRRPTVPDPEEKP) are disordered. Coiled coils occupy residues 853 to 887 (FEEQ…ANEQ), 922 to 970 (LAKV…TQQD), and 1192 to 1233 (ADAV…SRSE). A compositionally biased stretch (basic and acidic residues) spans 1313–1324 (KEKLRQKPEVPV). The segment at 1313–1397 (KEKLRQKPEV…EKQDTEELKE (85 aa)) is disordered. The segment covering 1329–1341 (STDSRSSSSSDSS) has biased composition (low complexity). Residues 1379-1391 (VTEEPEGEEEKQD) show a composition bias toward acidic residues. Coiled-coil stretches lie at residues 1405–1439 (IKDL…CQER) and 1501–1654 (LNRT…LESK). Disordered stretches follow at residues 1684–1714 (VGVS…AHHH) and 1859–1884 (LKDG…RLQQ). Polar residues predominate over residues 1693–1708 (PSESPETYTGPSSECS). A coiled-coil region spans residues 1726-1935 (IEALKSRIEL…KEQLVKKTQL (210 aa)).

In terms of assembly, interacts (via N-terminus) with DZIP1. As to expression, expressed in sensory neurons type I and in germ cells (at protein level).

The protein resides in the cytoplasm. It localises to the cytoskeleton. The protein localises to the cilium basal body. It is found in the microtubule organizing center. Its subcellular location is the centrosome. The protein resides in the centriole. Its function is as follows. Essential for ciliogenesis in sensory neurons and spermatocytes. During neuron and spermatocyte ciliogenesis, essential for initiating transition zone (TZ) assembly and is required for the formation of diverse connections between microtubules and between microtubules and the membrane. Regulates TZ assembly by recruiting DZIP1 to the plasma membrane where it promotes early ciliary membrane formation resulting in the initiation of TZ assembly. In Drosophila melanogaster (Fruit fly), this protein is Centrosomal protein Cep290.